Reading from the N-terminus, the 412-residue chain is Isocitrate dehydrogenase [NADP] cytoplasmic (412 aa).

NADP(+) is bound by residues 76-78 (TIT) and Arg-83. Thr-78 contacts substrate. Residues 95–101 (SPNGTIR), Arg-110, and Arg-133 each bind substrate. Position 253 (Asp-253) interacts with Mn(2+). Lys-261 is an NADP(+) binding site. A Mn(2+)-binding site is contributed by Asp-276. NADP(+)-binding positions include 309–314 (GTVTRH) and Asn-327.

It belongs to the isocitrate and isopropylmalate dehydrogenases family. In terms of assembly, homodimer. Mg(2+) is required as a cofactor. It depends on Mn(2+) as a cofactor.

It is found in the cytoplasm. The catalysed reaction is D-threo-isocitrate + NADP(+) = 2-oxoglutarate + CO2 + NADPH. The protein is Isocitrate dehydrogenase [NADP] cytoplasmic (idhC) of Dictyostelium discoideum (Social amoeba).